The chain runs to 802 residues: Copal-8-ol diphosphate hydratase, chloroplastic (802 aa).

A chloroplast-targeting transit peptide spans 1 to 24 (MQVIITSSHRFFCHHLHQLKSPTS). Lys-249 provides a ligand contact to substrate. Residues Asp-382 and Asp-384 each contribute to the Mg(2+) site. Positions 382-385 (DVDD) match the DXDD motif motif. Substrate is bound at residue Lys-468.

The protein belongs to the terpene synthase family. It depends on Mg(2+) as a cofactor. As to expression, expressed specifically in the secretory cells of the glandular trichomes.

It is found in the plastid. Its subcellular location is the chloroplast. The enzyme catalyses (2E,6E,10E)-geranylgeranyl diphosphate + H2O = 8-hydroxycopalyl diphosphate. Its pathway is secondary metabolite biosynthesis; terpenoid biosynthesis. Class-II terpene synthase that synthesizes 8-hydroxy-copalyl diphosphate. Involved in the biosynthesis of cis-abienol, a labdane diterpene that can be used as synthesis precursor of ambergris substitution fragance products. This Nicotiana tabacum (Common tobacco) protein is Copal-8-ol diphosphate hydratase, chloroplastic.